A 243-amino-acid polypeptide reads, in one-letter code: Uridine-cytidine kinase B (243 aa).

Residue 22–29 (GGTASGKT) coordinates ATP.

This sequence belongs to the uridine kinase family.

The enzyme catalyses uridine + ATP = UMP + ADP + H(+). It catalyses the reaction cytidine + ATP = CMP + ADP + H(+). It participates in pyrimidine metabolism; CTP biosynthesis via salvage pathway; CTP from cytidine: step 1/3. The protein operates within pyrimidine metabolism; UMP biosynthesis via salvage pathway; UMP from uridine: step 1/1. Catalyzes the conversion of uridine into uridine monophosphate and cytidine into cytidine monophosphate in the pyrimidine salvage pathway. The sequence is that of Uridine-cytidine kinase B (udkB) from Dictyostelium discoideum (Social amoeba).